Here is a 256-residue protein sequence, read N- to C-terminus: Small ribosomal subunit protein eS1 (256 aa).

Ala2 is modified (N-acetylalanine; partial).

The protein belongs to the eukaryotic ribosomal protein eS1 family. In terms of assembly, component of the small ribosomal subunit. Mature ribosomes consist of a small (40S) and a large (60S) subunit. The 40S subunit contains about 33 different proteins and 1 molecule of RNA (18S). The 60S subunit contains about 49 different proteins and 3 molecules of RNA (25S, 5.8S and 5S).

Its subcellular location is the cytoplasm. This chain is Small ribosomal subunit protein eS1 (rps1), found in Botryotinia fuckeliana (strain B05.10) (Noble rot fungus).